We begin with the raw amino-acid sequence, 689 residues long: Glycine--tRNA ligase beta subunit (689 aa).

It belongs to the class-II aminoacyl-tRNA synthetase family. Tetramer of two alpha and two beta subunits.

It localises to the cytoplasm. The catalysed reaction is tRNA(Gly) + glycine + ATP = glycyl-tRNA(Gly) + AMP + diphosphate. The polypeptide is Glycine--tRNA ligase beta subunit (Salmonella schwarzengrund (strain CVM19633)).